The primary structure comprises 336 residues: Geranylgeranyl pyrophosphate synthase 6, mitochondrial (336 aa).

The N-terminal 22 residues, 1–22, are a transit peptide targeting the mitochondrion; that stretch reads MRPRYSLILSAMRLIRPSNRRL. The isopentenyl diphosphate site is built by K80, R83, and H112. Mg(2+)-binding residues include D119 and D125. R130 contributes to the dimethylallyl diphosphate binding site. R131 provides a ligand contact to isopentenyl diphosphate. Dimethylallyl diphosphate contacts are provided by K221, T222, Q259, K276, and K286.

This sequence belongs to the FPP/GGPP synthase family. As to quaternary structure, monomer. Requires Mg(2+) as cofactor.

It localises to the mitochondrion. It carries out the reaction isopentenyl diphosphate + dimethylallyl diphosphate = (2E)-geranyl diphosphate + diphosphate. The enzyme catalyses isopentenyl diphosphate + (2E)-geranyl diphosphate = (2E,6E)-farnesyl diphosphate + diphosphate. It catalyses the reaction isopentenyl diphosphate + (2E,6E)-farnesyl diphosphate = (2E,6E,10E)-geranylgeranyl diphosphate + diphosphate. The protein operates within isoprenoid biosynthesis; farnesyl diphosphate biosynthesis; farnesyl diphosphate from geranyl diphosphate and isopentenyl diphosphate: step 1/1. It functions in the pathway isoprenoid biosynthesis; geranyl diphosphate biosynthesis; geranyl diphosphate from dimethylallyl diphosphate and isopentenyl diphosphate: step 1/1. It participates in isoprenoid biosynthesis; geranylgeranyl diphosphate biosynthesis; geranylgeranyl diphosphate from farnesyl diphosphate and isopentenyl diphosphate: step 1/1. Catalyzes the trans-addition of the three molecules of IPP onto DMAPP to form geranylgeranyl pyrophosphate. The protein is Geranylgeranyl pyrophosphate synthase 6, mitochondrial of Arabidopsis thaliana (Mouse-ear cress).